Consider the following 510-residue polypeptide: uncharacterized protein (510 aa).

It belongs to the phage portal family. PBSX subfamily.

This is an uncharacterized protein from Bacillus subtilis (strain 168).